Reading from the N-terminus, the 716-residue chain is Macrophage-expressed gene 1 protein (716 aa).

The N-terminal stretch at 1–20 (MNNFRATILFWAVAAWVTSG) is a signal peptide. Positions 30-345 (GVQKCKNALK…TAVKRYYTFN (316 aa)) constitute an MACPF domain. An intrachain disulfide couples Cys-34 to Cys-70. Transmembrane regions (beta stranded) follow at residues 113–120 (YSINTELS) and 127–132 (GKFSTE). 2 N-linked (GlcNAc...) asparagine glycosylation sites follow: Asn-168 and Asn-185. 2 beta stranded membrane passes run 235-244 (AVTASAGLAF) and 248-256 (VNFKFEENY). Asn-269 carries an N-linked (GlcNAc...) asparagine glycan. Cys-350 and Cys-369 are oxidised to a cystine. Asn-375 carries an N-linked (GlcNAc...) asparagine glycan. 5 disulfides stabilise this stretch: Cys-385/Cys-397, Cys-435/Cys-449, Cys-439/Cys-445, Cys-534/Cys-572, and Cys-557/Cys-577. Residues 413-656 (PSGYSPVRLL…GDGGGLSGGA (244 aa)) are P2. Residues 656–676 (AAAGVTLGVTTILAVVITLAI) traverse the membrane as a helical segment. The segment at 693–716 (RQSLVPGTAATGDTTYQEQGQSPA) is disordered. Residues 703-716 (TGDTTYQEQGQSPA) are compositionally biased toward polar residues.

It belongs to the MPEG1 family. In terms of assembly, homooligomer; predominantly forms a homooligomeric arc-shaped pore complex instead of complete rings of 16 subunits. Post-translationally, proteolytically processed in two steps to generate the Macrophage-expressed gene 1 protein, processed form: cleaved by trypsin in proximity of the helical transmembrane domain releases the ectodomain into the lysosomal lumen to orient the pore-forming domain toward the endogenous membranes, and processed by the asparagine endopeptidase (LGMN). Proteolytic processing in antigen-containing vesicles is pH-dependent. In terms of processing, monoubiquitinated in response to bacterial infection; ubiquitination is required for vesicular localization and antibacterial activity and can be blocked by bacterial cell cycle inhibiting factor (cif).

It is found in the cytoplasmic vesicle membrane. Its subcellular location is the cytoplasmic vesicle. The protein localises to the phagosome membrane. Forms arc- and ring-shaped pre-pores on top of the membrane at neutral to slightly acidic pH conditions and converts to pores upon acidification. Undergoes transition from the pre-pore to the pore in a processive clockwise hand-over-hand process. In the pore state, 2 alpha-helical regions refold into transmembrane hairpins (TMH1 and TMH2) in each protomer that form in the ensemble complex giant beta-barrel transmembrane pores. Functionally, pore-forming protein involved in both innate and adaptive immunity. Plays a central role in antigen cross-presentation in dendritic cells by forming a pore in antigen-containing compartments, thereby promoting delivery of antigens for cross-presentation. Also involved in innate immune response following bacterial infection; shows antibacterial activity against a wide spectrum of Gram-positive, Gram-negative and acid-fast bacteria. Reduces the viability of the intracytosolic pathogen L.monocytogenes by inhibiting acidification of the phagocytic vacuole of host cells which restricts bacterial translocation from the vacuole to the cytosol. Required for the antibacterial activity of reactive oxygen species and nitric oxide. In terms of biological role, pore-forming protein that plays a central role in antigen cross-presentation in dendritic cells by mediating delivery of antigens for cross-presentation. Dendritic cells bridge innate and adaptive immunity by capturing exogenous antigens on MHC class-I molecules and presenting them to naive CD8(+) T-cells. Acts by forming a pore in antigen-containing compartments, promoting the release of antigens into the cytosol, enabling generation of MHCI:peptide complexes and T-cell priming. This Pongo abelii (Sumatran orangutan) protein is Macrophage-expressed gene 1 protein (MPEG1).